The chain runs to 249 residues: Type I iodothyronine deiodinase (249 aa).

Topologically, residues 1–12 are extracellular; the sequence is MGLPRPGLWLKR. The helical; Signal-anchor for type III membrane protein transmembrane segment at 13–33 threads the bilayer; sequence LWVLVQVAVEVAVGKVLMTLF. Residues 34–249 lie on the Cytoplasmic side of the membrane; the sequence is PERVKQNILA…VRAVLEELHS (216 aa). The active site involves selenocysteine 126. Position 126 (selenocysteine 126) is a non-standard amino acid, selenocysteine.

It belongs to the iodothyronine deiodinase family. In terms of assembly, predominantly monomer. Can form homodimers but homodimerization is not essential for enzyme activity.

It is found in the cell membrane. The protein localises to the endoplasmic reticulum membrane. It localises to the basolateral cell membrane. It catalyses the reaction 3,3',5-triiodo-L-thyronine + iodide + A + H(+) = L-thyroxine + AH2. It carries out the reaction 3,3',5'-triiodo-L-thyronine + iodide + A + H(+) = L-thyroxine + AH2. The enzyme catalyses 3,3'-diiodo-L-thyronine + iodide + A + H(+) = 3,3',5'-triiodo-L-thyronine + AH2. The catalysed reaction is 3,3'-diiodo-L-thyronine + iodide + A + H(+) = 3,3',5-triiodo-L-thyronine + AH2. It catalyses the reaction 3'-iodo-L-thyronine + iodide + A + H(+) = 3',5'-diiodo-L-thyronine + AH2. It carries out the reaction 3-iodo-L-thyronine + iodide + A + H(+) = 3,5-diiodo-L-thyronine + AH2. The enzyme catalyses 3-iodo-L-thyronine + iodide + A + H(+) = 3,3'-diiodo-L-thyronine + AH2. The catalysed reaction is 3,3'-diiodothyronamine + iodide + A + H(+) = 3,3',5'-triiodothyronamine + AH2. It catalyses the reaction 3'-iodothyronamine + iodide + A + H(+) = 3',5'-diiodothyronamine + AH2. It carries out the reaction 3-iodothyronamine + iodide + A + H(+) = 3,3'-diiodothyronamine + AH2. The enzyme catalyses 3,3'-diiodothyronamine + iodide + A + H(+) = 3,3',5-triiodothyronamine + AH2. The catalysed reaction is 3-iodothyronamine + iodide + A + H(+) = 3,5-diiodothyronamine + AH2. It catalyses the reaction 3,3'-diiodo-L-thyronine sulfate + iodide + A + H(+) = 3,3',5'-triiodo-L-thyronine sulfate + AH2. It carries out the reaction 3,3',5'-triiodo-L-thyronine sulfate + iodide + A + H(+) = L-thyroxine sulfate + AH2. The enzyme catalyses 3,3'-diiodo-L-thyronine sulfate + iodide + A + H(+) = 3,3',5-triiodo-L-thyronine sulfate + AH2. Functionally, plays a crucial role in the metabolism of thyroid hormones (TH) and has specific roles in TH activation and inactivation by deiodination. Catalyzes the deiodination of L-thyroxine (T4) to 3,5,3'-triiodothyronine (T3) via outer-ring deiodination (ORD) and of T4 to 3,3',5'-triiodothyronine (rT3) via inner-ring deiodination (IRD). Catalyzes the deiodiantion of rT3 to 3,3'-diiodothyronine (3,3'-T2) and 3',5'-diiodothyronine (3',5'-T2) to 3'-monoiodothyronine (3'-T1) via ORD. Catalyzes the deiodination of T3 to 3,3'-T2, 3,5-diiodothyronine (3,5-T2) to 3-monoiodothyronine (3-T1) and 3,3'-T2 to 3-T1 via IRD. Catalyzes the phenolic ring deiodinations of 3,3',5'-triiodothyronamine, 3',5'-diiodothyronamine and 3,3'-diiodothyronamine as well as tyrosyl ring deiodinations of 3,5,3'-triiodothyronamine and 3,5-diiodothyronamine. Catalyzes the deiodination of L-thyroxine sulfate and 3,3',5-triiodo-L-thyronine sulfate via IRD and of 3,3',5'-triiodo-L-thyronine sulfate via ORD. The protein is Type I iodothyronine deiodinase (DIO1) of Oryctolagus cuniculus (Rabbit).